The sequence spans 155 residues: Perlucin (155 aa).

3 disulfides stabilise this stretch: cysteine 2–cysteine 13, cysteine 30–cysteine 127, and cysteine 102–cysteine 119. The C-type lectin domain maps to 9–128 (NRRSCYWFST…CQKPSHFICE (120 aa)). An N-linked (GlcNAc...) asparagine glycan is attached at asparagine 84. A run of 2 repeats spans residues 136 to 145 (NSLHANLQQR) and 146 to 155 (DSLHANLQQR).

Post-translationally, glycosylated.

Its function is as follows. May promote nucleation and/or growth of calcium carbonate crystals. Binds to D-galactose and D-mannose/D-glucose. The polypeptide is Perlucin (Haliotis laevigata (Smooth Australian abalone)).